A 131-amino-acid polypeptide reads, in one-letter code: Arsenate reductase 2 (131 aa).

Residues cysteine 10, cysteine 82, and cysteine 89 each act as nucleophile in the active site. Disulfide bonds link cysteine 10–cysteine 82 and cysteine 82–cysteine 89.

The protein belongs to the low molecular weight phosphotyrosine protein phosphatase family. Thioredoxin-coupled ArsC subfamily.

Its subcellular location is the cytoplasm. The catalysed reaction is arsenate + [thioredoxin]-dithiol + H(+) = arsenite + [thioredoxin]-disulfide + H2O. In terms of biological role, catalyzes the reduction of arsenate [As(V)] to arsenite [As(III)]. This is Arsenate reductase 2 from Staphylococcus saprophyticus subsp. saprophyticus (strain ATCC 15305 / DSM 20229 / NCIMB 8711 / NCTC 7292 / S-41).